The chain runs to 812 residues: Probable beta-glucosidase D (812 aa).

An N-terminal signal peptide occupies residues 1–18 (MRVPSLSVLSFLLGTALA). Asparagine 53 and asparagine 188 each carry an N-linked (GlcNAc...) asparagine glycan. The tract at residues 186–248 (ETNRTGGMGG…GMGGGMAGSS (63 aa)) is disordered. A compositionally biased stretch (gly residues) spans 191–207 (GGMGGGGGAPGGGGMGR). A compositionally biased stretch (polar residues) spans 211–225 (FSSSVPGGMSPTSSA). The span at 236-245 (GGSGMGGGMA) shows a compositional bias: gly residues. N-linked (GlcNAc...) asparagine glycosylation is present at asparagine 296. The active site involves aspartate 324. 6 N-linked (GlcNAc...) asparagine glycosylation sites follow: asparagine 360, asparagine 384, asparagine 422, asparagine 501, asparagine 592, and asparagine 646.

Belongs to the glycosyl hydrolase 3 family.

Its subcellular location is the secreted. The catalysed reaction is Hydrolysis of terminal, non-reducing beta-D-glucosyl residues with release of beta-D-glucose.. It functions in the pathway glycan metabolism; cellulose degradation. In terms of biological role, beta-glucosidases are one of a number of cellulolytic enzymes involved in the degradation of cellulosic biomass. Catalyzes the last step releasing glucose from the inhibitory cellobiose. The polypeptide is Probable beta-glucosidase D (bglD) (Emericella nidulans (strain FGSC A4 / ATCC 38163 / CBS 112.46 / NRRL 194 / M139) (Aspergillus nidulans)).